Consider the following 137-residue polypeptide: 5-hydroxytryptamine receptor 4 (137 aa).

The helical transmembrane segment at 12-35 (TPLRVAVLLAGCWAIPVLISFLPI) threads the bilayer. Asn-58 is a glycosylation site (N-linked (GlcNAc...) asparagine). Residues 67–90 (NKPYAITCSVVAFYIPFLLMVLAY) form a helical membrane-spanning segment. The tract at residues 112–137 (APAEGRPPSADQHSTHRMRTETKAAK) is disordered.

It belongs to the G-protein coupled receptor 1 family. As to quaternary structure, interacts (via C-terminus 330-346 AA) with GRK5; this interaction is promoted by 5-HT (serotonin).

Its subcellular location is the cell membrane. It is found in the endosome membrane. G-protein coupled receptor for 5-hydroxytryptamine (serotonin), a biogenic hormone that functions as a neurotransmitter, a hormone and a mitogen. Ligand binding causes a conformation change that triggers signaling via guanine nucleotide-binding proteins (G proteins) and modulates the activity of downstream effectors. HTR4 is coupled to G(s) G alpha proteins and mediates activation of adenylate cyclase activity. The protein is 5-hydroxytryptamine receptor 4 (HTR4) of Sus scrofa (Pig).